Reading from the N-terminus, the 118-residue chain is Large ribosomal subunit protein uL18 (118 aa).

The protein belongs to the universal ribosomal protein uL18 family. Part of the 50S ribosomal subunit; part of the 5S rRNA/L5/L18/L25 subcomplex. Contacts the 5S and 23S rRNAs.

This is one of the proteins that bind and probably mediate the attachment of the 5S RNA into the large ribosomal subunit, where it forms part of the central protuberance. The chain is Large ribosomal subunit protein uL18 from Brachyspira hyodysenteriae (strain ATCC 49526 / WA1).